Reading from the N-terminus, the 362-residue chain is uncharacterized protein (362 aa).

Disordered regions lie at residues Met1–Arg117, Ser153–Lys172, and Arg210–Asn266. The segment covering Ala12–Glu23 has biased composition (basic and acidic residues). Acidic residues predominate over residues Glu51–Ile70. 3 stretches are compositionally biased toward low complexity: residues Asn100–Thr112, Ser153–Ser167, and Val241–Ser265.

This is an uncharacterized protein from Caenorhabditis elegans.